Consider the following 603-residue polypeptide: Probable potassium transport system protein Kup (603 aa).

A run of 12 helical transmembrane segments spans residues 15–35, 43–63, 94–114, 135–155, 163–183, 209–229, 244–264, 283–303, 336–356, 365–385, 390–410, and 415–435; these read GLVFGDIGTSPIYTLTVIFLL, IIGVLSLIIWTLIILVTVEYA, VAFVTLLAYIGTSFLMGDGVI, NIGQSTIILISAAIAIALFSV, ITWVFGPIMVLWFATIGFSGI, GIIGFFVLSEVILCATGGEAL, AWRFVFLALVLNYLGQGAFLI, ILYIPFLLLSVVATIIASQAM, IYISTVNWLLLVSVLFMMLIF, AYGLAVTGTMSITGIMMTSIF, NITKALISLFITFIDVVFLLS, and IPHGGYWSVIIALFILSLILI.

This sequence belongs to the HAK/KUP transporter (TC 2.A.72) family.

The protein resides in the cell membrane. The catalysed reaction is K(+)(in) + H(+)(in) = K(+)(out) + H(+)(out). Transport of potassium into the cell. Likely operates as a K(+):H(+) symporter. This Methanosarcina barkeri (strain Fusaro / DSM 804) protein is Probable potassium transport system protein Kup.